A 672-amino-acid chain; its full sequence is Nuclear hormone receptor family member nhr-5 (672 aa).

A compositionally biased stretch (low complexity) spans 1–19; sequence MSSGGNSSNVNRNSGSSNV. The tract at residues 1–38 is disordered; that stretch reads MSSGGNSSNVNRNSGSSNVITLNDSDEETEDSNLGSSS. The nuclear receptor DNA-binding region spans 40 to 115; it reads TNLCKVCGAE…EGMNPAYVRP (76 aa). NR C4-type zinc fingers lie at residues 43-63 and 79-98; these read CKVCGAEKAALHYGALSCVGC and CAANGECTVSVLQKTQCRSC. In terms of domain architecture, NR LBD spans 155-424; it reads EMRTILMTLL…PLLTDLFGCF (270 aa). A disordered region spans residues 550-577; it reads NIQGPSHLPQCGSTVTQRPTVPSSTTSS. The segment covering 562–577 has biased composition (low complexity); it reads STVTQRPTVPSSTTSS.

The protein belongs to the nuclear hormone receptor family.

The protein localises to the nucleus. Orphan nuclear receptor. The chain is Nuclear hormone receptor family member nhr-5 (nhr-5) from Caenorhabditis elegans.